Consider the following 83-residue polypeptide: Large ribosomal subunit protein bL28 (83 aa).

It belongs to the bacterial ribosomal protein bL28 family.

The chain is Large ribosomal subunit protein bL28 from Amoebophilus asiaticus (strain 5a2).